The primary structure comprises 741 residues: Chromosome transmission fidelity protein 18 (741 aa).

Residue 183–190 (GPPGIGKT) participates in ATP binding.

It belongs to the activator 1 small subunits family. CTF18 subfamily. In terms of assembly, component of the CTF18-RFC complex, which consists of CTF18, CTF8, DCC1, RFC2, RFC3, RFC4 and RFC5. CTF18 interacts with ECO1.

The protein resides in the nucleus. Its function is as follows. Essential for the fidelity of chromosome transmission. Required for the DNA replication block checkpoint. Component of the RFC-like complex CTF18-RFC which is required for efficient establishment of chromosome cohesion during S-phase and may load or unload POL30/PCNA. During a clamp loading circle, the RFC:clamp complex binds to DNA and the recognition of the double-stranded/single-stranded junction stimulates ATP hydrolysis by RFC. The complex presumably provides bipartite ATP sites in which one subunit supplies a catalytic site for hydrolysis of ATP bound to the neighboring subunit. Dissociation of RFC from the clamp leaves the clamp encircling DNA. The sequence is that of Chromosome transmission fidelity protein 18 (CTF18) from Saccharomyces cerevisiae (strain ATCC 204508 / S288c) (Baker's yeast).